An 826-amino-acid chain; its full sequence is Ferric-pyoverdine M114 receptor PbuA (826 aa).

Residues 1–44 form the signal peptide; the sequence is MSASRFMLRPLTRALLMHGATRTRLAGTGLGLALTLTAAPYVQA. The short motif at 110–119 is the TonB box element; the sequence is DGNTVTVLGP. The region spanning 160–271 is the TBDR plug domain; that stretch reads SLKETPQSVT…TAGGVNFVRK (112 aa). In terms of domain architecture, TBDR beta-barrel spans 276-826; that stretch reads TAHTQLSLSA…NFVMSVKADF (551 aa). Residues 809 to 826 carry the TonB C-terminal box motif; it reads GNFYGDPRNFVMSVKADF.

This sequence belongs to the TonB-dependent receptor family.

It localises to the cell outer membrane. Functionally, specific receptor for the siderophore ferric pyoverdine (pseudobactin) M114. The polypeptide is Ferric-pyoverdine M114 receptor PbuA (pbuA) (Pseudomonas sp. (strain M114)).